Consider the following 199-residue polypeptide: Putative peroxiredoxin ycf42 (199 aa).

Residues 8 to 165 (LQVGQIAPDF…TLRVLQAIQY (158 aa)) form the Thioredoxin domain. Catalysis depends on C53, which acts as the Cysteine sulfenic acid (-SOH) intermediate.

Belongs to the peroxiredoxin family. AhpC/Prx1 subfamily. Homodimer; disulfide-linked, upon oxidation. In terms of processing, the Cys-53-SH group is the primary site of oxidation by H(2)O(2), and the oxidized Cys-53 (probably Cys-SOH) rapidly reacts with Cys-174-SH of the other subunit to form an intermolecular disulfide. This disulfide is subsequently reduced by thioredoxin.

The protein localises to the plastid. It is found in the chloroplast. It carries out the reaction a hydroperoxide + [thioredoxin]-dithiol = an alcohol + [thioredoxin]-disulfide + H2O. Functionally, thiol-specific peroxidase that catalyzes the reduction of hydrogen peroxide and organic hydroperoxides to water and alcohols, respectively. Plays a role in cell protection against oxidative stress by detoxifying peroxides. The sequence is that of Putative peroxiredoxin ycf42 (ycf42) from Porphyra purpurea (Red seaweed).